Reading from the N-terminus, the 115-residue chain is T-cell receptor gamma chain V region V108B (115 aa).

An N-terminal signal peptide occupies residues 1–18 (MLLLRWPTFCCLWVFGLG). Residues 19-115 (QLEQTELSVT…EATYYCAVWI (97 aa)) form a v segment region.

In Mus musculus (Mouse), this protein is T-cell receptor gamma chain V region V108B (Tcrg-V1).